Reading from the N-terminus, the 497-residue chain is Serine hydroxymethyltransferase (497 aa).

Residues L176 and 180–182 (GHL) each bind (6S)-5,6,7,8-tetrahydrofolate. K289 is modified (N6-(pyridoxal phosphate)lysine).

Belongs to the SHMT family. As to quaternary structure, homodimer. It depends on pyridoxal 5'-phosphate as a cofactor.

The protein localises to the cytoplasm. It catalyses the reaction (6R)-5,10-methylene-5,6,7,8-tetrahydrofolate + glycine + H2O = (6S)-5,6,7,8-tetrahydrofolate + L-serine. The protein operates within one-carbon metabolism; tetrahydrofolate interconversion. It functions in the pathway amino-acid biosynthesis; glycine biosynthesis; glycine from L-serine: step 1/1. Its function is as follows. Catalyzes the reversible interconversion of serine and glycine with tetrahydrofolate (THF) serving as the one-carbon carrier. This reaction serves as the major source of one-carbon groups required for the biosynthesis of purines, thymidylate, methionine, and other important biomolecules. Also exhibits THF-independent aldolase activity toward beta-hydroxyamino acids, producing glycine and aldehydes, via a retro-aldol mechanism. In Chlamydia trachomatis serovar L2b (strain UCH-1/proctitis), this protein is Serine hydroxymethyltransferase.